The sequence spans 61 residues: Large ribosomal subunit protein uL30 (61 aa).

The protein belongs to the universal ribosomal protein uL30 family. In terms of assembly, part of the 50S ribosomal subunit.

The protein is Large ribosomal subunit protein uL30 of Exiguobacterium sp. (strain ATCC BAA-1283 / AT1b).